Here is a 303-residue protein sequence, read N- to C-terminus: uncharacterized protein (303 aa).

4 consecutive transmembrane segments (helical) span residues 102–122 (TYLL…VMAI), 132–152 (FVLF…FLFF), 184–204 (LLYF…SLIY), and 221–241 (FILL…FLLF).

It is found in the membrane. This is an uncharacterized protein from Dictyostelium discoideum (Social amoeba).